The sequence spans 128 residues: Sulfurtransferase TusD (128 aa).

The Cysteine persulfide intermediate role is filled by C78.

Belongs to the DsrE/TusD family. As to quaternary structure, heterohexamer, formed by a dimer of trimers. The hexameric TusBCD complex contains 2 copies each of TusB, TusC and TusD. The TusBCD complex interacts with TusE.

It localises to the cytoplasm. Part of a sulfur-relay system required for 2-thiolation of 5-methylaminomethyl-2-thiouridine (mnm(5)s(2)U) at tRNA wobble positions. Accepts sulfur from TusA and transfers it in turn to TusE. The protein is Sulfurtransferase TusD of Enterobacter sp. (strain 638).